A 562-amino-acid chain; its full sequence is Phosphomethylpyrimidine synthase (562 aa).

Substrate-binding positions include asparagine 179, methionine 208, tyrosine 237, histidine 273, 293 to 295, 334 to 337, and glutamate 373; these read SRG and DGLR. Histidine 377 lines the Zn(2+) pocket. Tyrosine 400 serves as a coordination point for substrate. Histidine 441 is a Zn(2+) binding site. 3 residues coordinate [4Fe-4S] cluster: cysteine 521, cysteine 524, and cysteine 529.

The protein belongs to the ThiC family. It depends on [4Fe-4S] cluster as a cofactor.

The catalysed reaction is 5-amino-1-(5-phospho-beta-D-ribosyl)imidazole + S-adenosyl-L-methionine = 4-amino-2-methyl-5-(phosphooxymethyl)pyrimidine + CO + 5'-deoxyadenosine + formate + L-methionine + 3 H(+). It functions in the pathway cofactor biosynthesis; thiamine diphosphate biosynthesis. Functionally, catalyzes the synthesis of the hydroxymethylpyrimidine phosphate (HMP-P) moiety of thiamine from aminoimidazole ribotide (AIR) in a radical S-adenosyl-L-methionine (SAM)-dependent reaction. The protein is Phosphomethylpyrimidine synthase of Geobacillus kaustophilus (strain HTA426).